The sequence spans 67 residues: Probable Sec-independent protein translocase protein TatE (67 aa).

A helical transmembrane segment spans residues 4–21; that stretch reads ISITKLLVVAALIVLVFG. Residues 43 to 67 are disordered; the sequence is MNDDDTSVKKSAEEDVPADKISHKE.

This sequence belongs to the TatA/E family. TatE subfamily.

It is found in the cell inner membrane. In terms of biological role, part of the twin-arginine translocation (Tat) system that transports large folded proteins containing a characteristic twin-arginine motif in their signal peptide across membranes. TatE shares overlapping functions with TatA. The protein is Probable Sec-independent protein translocase protein TatE of Enterobacter lignolyticus (strain SCF1).